The primary structure comprises 559 residues: Cytoplasmic polyadenylation element-binding protein 1 (559 aa).

A disordered region spans residues arginine 223–serine 244. 2 RRM domains span residues cysteine 304–valine 401 and asparagine 423–glutamate 504. The Zn(2+) site is built by cysteine 508, cysteine 511, cysteine 520, cysteine 525, cysteine 530, cysteine 533, histidine 538, and histidine 546.

It belongs to the RRM CPEB family. As to quaternary structure, interacts with kinesin, dynein, APLP1, APLP2, TENT2/GLD2 and APP. Both phosphorylated and non phosphorylated forms interact with APLP1. Interacts with TENT4B; the interaction is required for TENT4B-mediated translational control.

It is found in the cytoplasm. Functionally, sequence-specific RNA-binding protein that regulates mRNA cytoplasmic polyadenylation and translation initiation during oocyte maturation and early development. Binds to the cytoplasmic polyadenylation element (CPE), an uridine-rich sequence element (consensus sequence 5'-UUUUUAU-3') within the mRNA 3'-UTR. In Carassius auratus (Goldfish), this protein is Cytoplasmic polyadenylation element-binding protein 1 (cpeb1).